Consider the following 506-residue polypeptide: MTEHLPTSQVSFDENALIAERRAKLLALRAQGVAYPNDVKREHYAADVQVAFANVETWTAEALEASGDRVRMAGRLMAKRLMGKASFAQIQDESGRIQLLIQSNVLGEDSYAAFKVLDVGDIIAVEGGLTRTRTGELSVKVNVLRLLTKALRPLPDKWHGLTDVEQRYRQRYVDLIVTPESREIFIKRSKIIRALRTWLDARLFLEVETPMMHYIPGGAAAKPFVTYHNALDLELYLRVAPELYLKRLVVGGLERVYEINRNFRNEGVSTRHNPEFTMLELYEAYSTYHEVMDLAETMIRDTAQSVLGTTQVIWDGAQIDLGPIFRRWRMDEAVCHHNPEISVAECTDRDALLLHCERLKIKVKSSYGWGRLLLSIFEATVEHTLIQPTFITDHPVEISPLARESDIEPGYTDRFELFINGKEIANGFSELNDPEEQAMRFQKQVEAKEGGDDEAMYYDADYIRALEYGMAPTGGLGIGVDRLVMLLTGSTSIRDVLLFPYMRPER.

Positions 416 and 423 each coordinate Mg(2+).

This sequence belongs to the class-II aminoacyl-tRNA synthetase family. Homodimer. Mg(2+) serves as cofactor.

The protein resides in the cytoplasm. The enzyme catalyses tRNA(Lys) + L-lysine + ATP = L-lysyl-tRNA(Lys) + AMP + diphosphate. The polypeptide is Lysine--tRNA ligase (lysS) (Xylella fastidiosa (strain 9a5c)).